The sequence spans 104 residues: Fusaric acid biosynthesis protein 2 (104 aa).

This sequence belongs to the YciI family.

It participates in mycotoxin biosynthesis. Part of the gene cluster that mediates the biosynthesis of fusaric acid, a mycotoxin with low to moderate toxicity to animals and humans, but with high phytotoxic properties. L-aspartate is suggested as fusaric acid amino acid precursor that is activated and further processed to O-acetyl-L-homoserine by cluster enzymes aspartate kinase FUB3 and homoserine O-acetyltransferase FUB5, as well as enzymes of the primary metabolism. The polyketide synthase (PKS) FUB1 generates the triketide trans-2-hexenal which is presumptively released by the hydrolase FUB4 and linked to the NRPS-bound amino acid precursor by NAD(P)-dependent dehydrogenase FUB6. FUB1, FUB4, and the non-canonical NRPS Fub8 may form an enzyme complex. Further processing of the NRPS-bound intermediate might be carried out by FUB6 and the sulfhydrylase FUB7, enabling a spontaneous electrocyclization to close the carbon backbone of fusaric acid. Dihydrofusaric acid is likely to be released via reduction by the thioester reductase (TR) domain of FUB8 whereupon the final oxidation to fusaric acid may (also) be performed by the FMN-dependent dehydrogenase FUB9. In Gibberella moniliformis (strain M3125 / FGSC 7600) (Maize ear and stalk rot fungus), this protein is Fusaric acid biosynthesis protein 2.